The following is a 25-amino-acid chain: GLLSVLGSVAKHVLPHVVPVIAEKL.

A Leucine amide modification is found at L25.

The protein belongs to the frog skin active peptide (FSAP) family. Caerin subfamily. Expressed by the skin dorsal glands.

Its subcellular location is the secreted. Antibacterial peptide with wide spectrum of activity. The polypeptide is Caerin-1.10 (Litoria rothii (Roth's tree frog)).